The primary structure comprises 609 residues: Alpha-glycerophosphate oxidase (609 aa).

21-49 (DVLIIGGGITGAGVAVQTAAAGMKTVLLE) is an FAD binding site.

FAD serves as cofactor.

The protein resides in the cytoplasm. It catalyses the reaction sn-glycerol 3-phosphate + O2 = dihydroxyacetone phosphate + H2O2. It participates in membrane lipid metabolism; glycerophospholipid metabolism. This Enterococcus casseliflavus (Enterococcus flavescens) protein is Alpha-glycerophosphate oxidase (glpO).